The primary structure comprises 1180 residues: Lon protease homolog 2, peroxisomal (1180 aa).

Residues 19–366 enclose the Lon N-terminal domain; that stretch reads LPTCKLDSNL…ELINMINQLI (348 aa). The segment at 416 to 465 is disordered; that stretch reads PISNRGNIKSFNNSENGNNNKTNGSGITSRRPKSNEDGGEVYDEEDDDEE. Positions 422–444 are enriched in low complexity; sequence NIKSFNNSENGNNNKTNGSGITS. A compositionally biased stretch (acidic residues) spans 452-465; the sequence is DGGEVYDEEDDDEE. 667–674 provides a ligand contact to ATP; it reads GPPGTGKT. The Lon proteolytic domain maps to 924 to 1163; that stretch reads NSRVGIVNGL…YDVMKILWGE (240 aa). Catalysis depends on residues S1032 and K1075.

This sequence belongs to the peptidase S16 family.

The protein resides in the peroxisome matrix. The enzyme catalyses Hydrolysis of proteins in presence of ATP.. In terms of biological role, ATP-dependent serine protease that mediates the selective degradation of misfolded and unassembled polypeptides in the peroxisomal matrix. Necessary for type 2 peroxisome targeting signal (PTS2)-containing protein processing and facilitates peroxisome matrix protein import. This Scheffersomyces stipitis (strain ATCC 58785 / CBS 6054 / NBRC 10063 / NRRL Y-11545) (Yeast) protein is Lon protease homolog 2, peroxisomal.